We begin with the raw amino-acid sequence, 351 residues long: Nuclear inhibitor of protein phosphatase 1 (351 aa).

Residues methionine 1–lysine 142 form an interaction with CDC5L, SF3B1 and MELK region. An FHA domain is found at tyrosine 49–leucine 101. The tract at residues methionine 143–asparagine 224 is interaction with EED. Threonine 161 bears the Phosphothreonine mark. 2 positions are modified to phosphoserine: serine 178 and serine 199. Short sequence motifs (nuclear localization signal) lie at residues glycine 185–isoleucine 209 and isoleucine 210–glycine 240. Residues arginine 191–arginine 200 form an involved in PP-1 inhibition region. The segment at arginine 200–phenylalanine 203 is involved in PP-1 binding. Position 204 is a phosphoserine (serine 204). The residue at position 249 (serine 249) is a Phosphoserine. Position 264 is a phosphotyrosine (tyrosine 264). Positions alanine 310–glutamate 329 are interaction with EED. The interval asparagine 314–isoleucine 351 is disordered. The tract at residues proline 330–isoleucine 351 is RNA-binding. Positions lysine 331–lysine 337 are involved in PP-1 inhibition. Position 335 is a phosphotyrosine (tyrosine 335).

In terms of assembly, interacts with phosphorylated CDC5L, SF3B1 and MELK. Part of the spliceosome. Interacts with PPP1CA, PPP1CB and PPP1CC. Interacts with EED. Part of a complex consisting of PPP1R8, EED, HDAC2 and PP-1. May be inactivated by phosphorylation on Ser-199 or Ser-204.

The protein resides in the nucleus. Its subcellular location is the nucleus speckle. Functionally, inhibitor subunit of the major nuclear protein phosphatase-1 (PP-1). It has RNA-binding activity but does not cleave RNA and may target PP-1 to RNA-associated substrates. May also be involved in pre-mRNA splicing. Binds DNA and might act as a transcriptional repressor. Essential for cell proliferation and early embryonic development. In Mus musculus (Mouse), this protein is Nuclear inhibitor of protein phosphatase 1 (Ppp1r8).